The sequence spans 360 residues: Chorismate synthase (360 aa).

Positions 48 and 54 each coordinate NADP(+). FMN-binding positions include 125–127 (RSS), 246–247 (NA), G286, 301–305 (KPTSS), and R327.

The protein belongs to the chorismate synthase family. As to quaternary structure, homotetramer. FMNH2 is required as a cofactor.

It catalyses the reaction 5-O-(1-carboxyvinyl)-3-phosphoshikimate = chorismate + phosphate. It participates in metabolic intermediate biosynthesis; chorismate biosynthesis; chorismate from D-erythrose 4-phosphate and phosphoenolpyruvate: step 7/7. Functionally, catalyzes the anti-1,4-elimination of the C-3 phosphate and the C-6 proR hydrogen from 5-enolpyruvylshikimate-3-phosphate (EPSP) to yield chorismate, which is the branch point compound that serves as the starting substrate for the three terminal pathways of aromatic amino acid biosynthesis. This reaction introduces a second double bond into the aromatic ring system. This chain is Chorismate synthase, found in Glaesserella parasuis serovar 5 (strain SH0165) (Haemophilus parasuis).